Here is a 94-residue protein sequence, read N- to C-terminus: Co-chaperonin GroES (94 aa).

The protein belongs to the GroES chaperonin family. In terms of assembly, heptamer of 7 subunits arranged in a ring. Interacts with the chaperonin GroEL.

The protein localises to the cytoplasm. Its function is as follows. Together with the chaperonin GroEL, plays an essential role in assisting protein folding. The GroEL-GroES system forms a nano-cage that allows encapsulation of the non-native substrate proteins and provides a physical environment optimized to promote and accelerate protein folding. GroES binds to the apical surface of the GroEL ring, thereby capping the opening of the GroEL channel. The sequence is that of Co-chaperonin GroES from Ruminiclostridium cellulolyticum (strain ATCC 35319 / DSM 5812 / JCM 6584 / H10) (Clostridium cellulolyticum).